The chain runs to 169 residues: Protein GrpE (169 aa).

Positions 1–25 (MSEEKQNGQIQEETVENSENQNNEL) are disordered. Positions 7–23 (NGQIQEETVENSENQNN) are enriched in polar residues.

It belongs to the GrpE family. Homodimer.

It localises to the cytoplasm. Its function is as follows. Participates actively in the response to hyperosmotic and heat shock by preventing the aggregation of stress-denatured proteins, in association with DnaK and GrpE. It is the nucleotide exchange factor for DnaK and may function as a thermosensor. Unfolded proteins bind initially to DnaJ; upon interaction with the DnaJ-bound protein, DnaK hydrolyzes its bound ATP, resulting in the formation of a stable complex. GrpE releases ADP from DnaK; ATP binding to DnaK triggers the release of the substrate protein, thus completing the reaction cycle. Several rounds of ATP-dependent interactions between DnaJ, DnaK and GrpE are required for fully efficient folding. This Campylobacter lari (strain RM2100 / D67 / ATCC BAA-1060) protein is Protein GrpE.